A 312-amino-acid chain; its full sequence is Deoxyribonuclease-1-like 1 (312 aa).

Positions 1 to 35 (MPSGQPVFPRRVPDAYIAMRGLVVASLLILLVGGT) are cleaved as a signal peptide. Asn102 is a glycosylation site (N-linked (GlcNAc...) asparagine). Residue Glu113 is part of the active site. A glycan (N-linked (GlcNAc...) asparagine) is linked at Asn133. His164 is a catalytic residue. Residues Cys203 and Cys240 are joined by a disulfide bond. Residue Asn239 is glycosylated (N-linked (GlcNAc...) asparagine).

It belongs to the DNase I family.

It localises to the endoplasmic reticulum. In Rattus norvegicus (Rat), this protein is Deoxyribonuclease-1-like 1 (Dnase1l1).